Reading from the N-terminus, the 1248-residue chain is ATP-dependent helicase/nuclease subunit A (1248 aa).

Residues T4–R480 enclose the UvrD-like helicase ATP-binding domain. ATP is bound at residue A25 to T32. One can recognise a UvrD-like helicase C-terminal domain in the interval E523–G820.

This sequence belongs to the helicase family. AddA subfamily. Heterodimer of AddA and AddB/RexB. Mg(2+) serves as cofactor.

It carries out the reaction Couples ATP hydrolysis with the unwinding of duplex DNA by translocating in the 3'-5' direction.. The enzyme catalyses ATP + H2O = ADP + phosphate + H(+). The heterodimer acts as both an ATP-dependent DNA helicase and an ATP-dependent, dual-direction single-stranded exonuclease. Recognizes the chi site generating a DNA molecule suitable for the initiation of homologous recombination. The AddA nuclease domain is required for chi fragment generation; this subunit has the helicase and 3' -&gt; 5' nuclease activities. This Ruminiclostridium cellulolyticum (strain ATCC 35319 / DSM 5812 / JCM 6584 / H10) (Clostridium cellulolyticum) protein is ATP-dependent helicase/nuclease subunit A.